Reading from the N-terminus, the 900-residue chain is Probable dipeptidyl-aminopeptidase B (900 aa).

The tract at residues M1–S83 is disordered. Over M1–R90 the chain is Cytoplasmic. Residues N24–F39 are compositionally biased toward low complexity. Polar residues predominate over residues N44–P55. The helical; Signal-anchor for type II membrane protein transmembrane segment at W91–W111 threads the bilayer. Residues G112–T900 are Vacuolar-facing. N-linked (GlcNAc...) asparagine glycans are attached at residues N150, N195, N348, N410, N514, N639, and N644. Residue S753 is the Charge relay system of the active site. N812 carries an N-linked (GlcNAc...) asparagine glycan. Active-site charge relay system residues include D830 and H863.

It belongs to the peptidase S9B family.

It localises to the vacuole membrane. It catalyses the reaction Release of an N-terminal dipeptide, Xaa-Yaa-|-Zaa-, from a polypeptide, preferentially when Yaa is Pro, provided Zaa is neither Pro nor hydroxyproline.. Functionally, type IV dipeptidyl-peptidase which removes N-terminal dipeptides sequentially from polypeptides having unsubstituted N-termini provided that the penultimate residue is proline. This chain is Probable dipeptidyl-aminopeptidase B (dapB), found in Talaromyces stipitatus (strain ATCC 10500 / CBS 375.48 / QM 6759 / NRRL 1006) (Penicillium stipitatum).